The primary structure comprises 242 residues: Dehydration-responsive element-binding protein 1J (242 aa).

The span at 20–29 (SSATTAATAT) shows a compositional bias: low complexity. Positions 20 to 44 (SSATTAATATGPASPKRPAGRTKFQ) are disordered. Residues 50–109 (VFRGVRRRGRAGRWVCEVRVPGSRGDRLWVGTFDTAEEAARAHDAAMLALCGASASLNFA) constitute a DNA-binding region (AP2/ERF). The tract at residues 143 to 184 (FQRRGSTAATATATSGDAASTAPPSSSPVLSPNDDNASSAST) is disordered. Residues 148–184 (STAATATATSGDAASTAPPSSSPVLSPNDDNASSAST) show a composition bias toward low complexity.

It belongs to the AP2/ERF transcription factor family. ERF subfamily.

The protein localises to the nucleus. Transcriptional activator that binds specifically to the DNA sequence 5'-[AG]CCGAC-3'. Binding to the C-repeat/DRE element mediates high salinity- and dehydration-inducible transcription. This chain is Dehydration-responsive element-binding protein 1J (DREB1J), found in Oryza sativa subsp. japonica (Rice).